Here is a 202-residue protein sequence, read N- to C-terminus: Small ribosomal subunit protein uS4 (202 aa).

The segment at 23–42 (RKAARRSYPPGQHGQARRKR) is disordered. In terms of domain architecture, S4 RNA-binding spans 90 to 154 (MRLDNLVFRL…SRKLVTANLE (65 aa)).

This sequence belongs to the universal ribosomal protein uS4 family. Part of the 30S ribosomal subunit. Contacts protein S5. The interaction surface between S4 and S5 is involved in control of translational fidelity.

One of the primary rRNA binding proteins, it binds directly to 16S rRNA where it nucleates assembly of the body of the 30S subunit. Its function is as follows. With S5 and S12 plays an important role in translational accuracy. This Synechococcus elongatus (strain ATCC 33912 / PCC 7942 / FACHB-805) (Anacystis nidulans R2) protein is Small ribosomal subunit protein uS4.